Reading from the N-terminus, the 250-residue chain is UDP-2,3-diacylglucosamine hydrolase (250 aa).

Mn(2+) contacts are provided by Asp8, His10, Asp41, Asn79, and His114. 79 to 80 (NR) is a substrate binding site. Substrate contacts are provided by Asp122, Ser160, Asp172, Gln175, and His203. Mn(2+) contacts are provided by His203 and His205.

The protein belongs to the LpxH family. Requires Mn(2+) as cofactor.

The protein localises to the cell inner membrane. It catalyses the reaction UDP-2-N,3-O-bis[(3R)-3-hydroxytetradecanoyl]-alpha-D-glucosamine + H2O = 2-N,3-O-bis[(3R)-3-hydroxytetradecanoyl]-alpha-D-glucosaminyl 1-phosphate + UMP + 2 H(+). The protein operates within glycolipid biosynthesis; lipid IV(A) biosynthesis; lipid IV(A) from (3R)-3-hydroxytetradecanoyl-[acyl-carrier-protein] and UDP-N-acetyl-alpha-D-glucosamine: step 4/6. Its function is as follows. Hydrolyzes the pyrophosphate bond of UDP-2,3-diacylglucosamine to yield 2,3-diacylglucosamine 1-phosphate (lipid X) and UMP by catalyzing the attack of water at the alpha-P atom. Involved in the biosynthesis of lipid A, a phosphorylated glycolipid that anchors the lipopolysaccharide to the outer membrane of the cell. This is UDP-2,3-diacylglucosamine hydrolase from Xylella fastidiosa (strain M12).